The sequence spans 120 residues: NAD(P)H-quinone oxidoreductase subunit 3, chloroplastic (120 aa).

3 helical membrane passes run 9–29, 64–84, and 88–108; these read IFWA…LISG, MFAL…PWAM, and VLGV…IVGS.

It belongs to the complex I subunit 3 family. In terms of assembly, NDH is composed of at least 16 different subunits, 5 of which are encoded in the nucleus.

It localises to the plastid. It is found in the chloroplast thylakoid membrane. The catalysed reaction is a plastoquinone + NADH + (n+1) H(+)(in) = a plastoquinol + NAD(+) + n H(+)(out). It carries out the reaction a plastoquinone + NADPH + (n+1) H(+)(in) = a plastoquinol + NADP(+) + n H(+)(out). NDH shuttles electrons from NAD(P)H:plastoquinone, via FMN and iron-sulfur (Fe-S) centers, to quinones in the photosynthetic chain and possibly in a chloroplast respiratory chain. The immediate electron acceptor for the enzyme in this species is believed to be plastoquinone. Couples the redox reaction to proton translocation, and thus conserves the redox energy in a proton gradient. The polypeptide is NAD(P)H-quinone oxidoreductase subunit 3, chloroplastic (Liriodendron tulipifera (Tuliptree)).